We begin with the raw amino-acid sequence, 118 residues long: Large ribosomal subunit protein bL20 (118 aa).

Belongs to the bacterial ribosomal protein bL20 family.

Its function is as follows. Binds directly to 23S ribosomal RNA and is necessary for the in vitro assembly process of the 50S ribosomal subunit. It is not involved in the protein synthesizing functions of that subunit. This chain is Large ribosomal subunit protein bL20, found in Francisella tularensis subsp. tularensis (strain FSC 198).